Here is a 257-residue protein sequence, read N- to C-terminus: Peptide methionine sulfoxide reductase (257 aa).

The tract at residues 61–88 is disordered; sequence LGFGSRPQPDPAASSAIAQGPDDDVPSP. Ser-244 carries the post-translational modification Phosphoserine.

It belongs to the MsrA Met sulfoxide reductase family.

It catalyses the reaction L-methionyl-[protein] + [thioredoxin]-disulfide + H2O = L-methionyl-(S)-S-oxide-[protein] + [thioredoxin]-dithiol. The enzyme catalyses [thioredoxin]-disulfide + L-methionine + H2O = L-methionine (S)-S-oxide + [thioredoxin]-dithiol. Its function is as follows. Has an important function as a repair enzyme for proteins that have been inactivated by oxidation. Catalyzes the reversible oxidation-reduction of methionine sulfoxide in proteins to methionine. The sequence is that of Peptide methionine sulfoxide reductase (PMSR) from Brassica napus (Rape).